The following is a 156-amino-acid chain: Small ribosomal subunit protein uS7 (156 aa).

It belongs to the universal ribosomal protein uS7 family. In terms of assembly, part of the 30S ribosomal subunit. Contacts proteins S9 and S11.

Its function is as follows. One of the primary rRNA binding proteins, it binds directly to 16S rRNA where it nucleates assembly of the head domain of the 30S subunit. Is located at the subunit interface close to the decoding center, probably blocks exit of the E-site tRNA. In Clostridium botulinum (strain Kyoto / Type A2), this protein is Small ribosomal subunit protein uS7.